Here is a 908-residue protein sequence, read N- to C-terminus: Serine/threonine-protein kinase minibrain (908 aa).

Disordered regions lie at residues 1-46 (MYRL…QRHA) and 119-143 (KKRR…LYND). The Bipartite nuclear localization signal motif lies at 121–139 (RRAQQTQGDDDSSNKKERK). Positions 132–141 (SSNKKERKLY) are enriched in basic and acidic residues. The 321-residue stretch at 164–484 (YEIDSLIGKG…PYYALQHNFF (321 aa)) folds into the Protein kinase domain. ATP is bound by residues 170–178 (IGKGSFGQV), Lys-193, and 243–246 (FELL). Catalysis depends on Asp-292, which acts as the Proton acceptor. 3 disordered regions span residues 552–592 (AAGS…AGPG), 623–669 (NAHP…RHSR), and 863–895 (PAAQ…SSPM). The segment covering 556–566 (SGSGSSVGGGS) has biased composition (gly residues). Low complexity predominate over residues 567–576 (SAAQQQQAMP). Residues 577-589 (LPLPLPLPLPPLA) show a composition bias toward pro residues. Residues 623-654 (NAHPPPSLANSHHSTNSLGSLNHISPGSTGCH) show a composition bias toward polar residues. 2 stretches are compositionally biased toward low complexity: residues 655–664 (NNNSNSSNNN) and 868–893 (GISQ…SSSS).

It belongs to the protein kinase superfamily. CMGC Ser/Thr protein kinase family. MNB/DYRK subfamily. In ventral nerve cord and supraesophageal ganglion of embryos. Is most prominent in the mushroom body neuropil and the outer proliferation center of the optic lobes in third instar larvae.

The protein resides in the nucleus. The catalysed reaction is L-seryl-[protein] + ATP = O-phospho-L-seryl-[protein] + ADP + H(+). It catalyses the reaction L-threonyl-[protein] + ATP = O-phospho-L-threonyl-[protein] + ADP + H(+). It carries out the reaction L-tyrosyl-[protein] + ATP = O-phospho-L-tyrosyl-[protein] + ADP + H(+). Role in the specific control of proper proliferation of optic lobe neuronal progeny. This is Serine/threonine-protein kinase minibrain (mnb) from Drosophila melanogaster (Fruit fly).